A 338-amino-acid polypeptide reads, in one-letter code: Anthocyanidin reductase ((2S)-flavan-3-ol-forming) (338 aa).

Residues 18 to 21, lysine 48, 87 to 90, and tyrosine 168 each bind NADP(+); these read TGFV and VATP.

This sequence belongs to the NAD(P)-dependent epimerase/dehydratase family. Dihydroflavonol-4-reductase subfamily. In terms of tissue distribution, expressed in leaves and grape berries.

It catalyses the reaction a (2S,3R)-flavan-3-ol + 2 NADP(+) = an anthocyanidin with a 3-hydroxy group + 2 NADPH + 2 H(+). It carries out the reaction a (2S,3S)-flavan-3-ol + 2 NADP(+) = an anthocyanidin with a 3-hydroxy group + 2 NADPH + 2 H(+). It functions in the pathway secondary metabolite biosynthesis; flavonoid biosynthesis. Its function is as follows. Produces the terminal flavan-3-ol monomers required for the formation of proanthocyanidins or condensed tannins in leaves and flowers, as well as in the skin and seeds of developing berries. Behaves as a reductase and as a C-3 epimerase. Catalyzes the double reduction of anthocyanidins, producing a mixture of (2S,3S)- and (2S,3R)-flavan-3-ols. The enzyme catalyzes sequential hydride transfers to C-2 and C-4, respectively and epimerization at C-3 is achieved by tautomerization that occurs between the two hydride transfers. Converts cyanidin, pelargonidin and delphinidin into catechin and epicatechin, afzelechin and epiafzelechin, and gallocatechin and epigallocatechin respectively. This chain is Anthocyanidin reductase ((2S)-flavan-3-ol-forming), found in Vitis vinifera (Grape).